A 263-amino-acid polypeptide reads, in one-letter code: Flagellar L-ring protein (263 aa).

The signal sequence occupies residues 1–15; sequence MKRLLCLLLLTTLTG. A lipid anchor (N-palmitoyl cysteine) is attached at Cys16. A lipid anchor (S-diacylglycerol cysteine) is attached at Cys16. Residues 123-143 are disordered; the sequence is KSADAELSKSNDSSMDPLQVG.

This sequence belongs to the FlgH family. The basal body constitutes a major portion of the flagellar organelle and consists of four rings (L,P,S, and M) mounted on a central rod.

The protein localises to the cell outer membrane. It is found in the bacterial flagellum basal body. Assembles around the rod to form the L-ring and probably protects the motor/basal body from shearing forces during rotation. The chain is Flagellar L-ring protein from Aliivibrio fischeri (strain ATCC 700601 / ES114) (Vibrio fischeri).